The chain runs to 208 residues: Small ribosomal subunit protein uS5 (208 aa).

Residues 1–38 (MPGRERRDGGRSADDNQKKNDRRGGRRDDRRNQQQDER) form a disordered region. Positions 41-104 (YIERVVTINR…EEARKNFFRV (64 aa)) constitute an S5 DRBM domain.

Belongs to the universal ribosomal protein uS5 family. Part of the 30S ribosomal subunit. Contacts proteins S4 and S8.

Its function is as follows. With S4 and S12 plays an important role in translational accuracy. Functionally, located at the back of the 30S subunit body where it stabilizes the conformation of the head with respect to the body. The polypeptide is Small ribosomal subunit protein uS5 (Corynebacterium diphtheriae (strain ATCC 700971 / NCTC 13129 / Biotype gravis)).